Consider the following 467-residue polypeptide: L-histidine transporter HutT (467 aa).

13 consecutive transmembrane segments (helical) span residues 18-38, 39-59, 71-91, 99-119, 125-145, 155-175, 200-220, 245-265, 280-300, 334-354, 358-378, 402-422, and 429-449; these read FMALGSAIGTGLFYGSASAIQ, MAGPAVLLAYLIGGAAVFMVM, VAGSFGHYATTYLGPMAGFIL, MVIVAIADVTAFGIYMGFWFP, IWVLGIVFLIGGLNLCNVKVF, LKVGAIVAMILAGLGIMAFGF, VGGLIASFAVVMFAFGGIEII, ILLFYVLTLFVLMCLYPWPQI, GIGSAAAVLNVVVISAAISAI, WMTVVVMGAALLIGVLLNYLI, VFLLIASIATFATVWVWLMIL, FWPYGPAMAIAFMVFIFGVLG, and AALIVGVIWVVFLVASYLLWC.

Belongs to the amino acid-polyamine-organocation (APC) superfamily. Amino acid transporter (AAT) (TC 2.A.3.1) family.

The protein localises to the cell inner membrane. It carries out the reaction L-histidine(out) + n H(+)(out) = L-histidine(in) + n H(+)(in). Transport activity is inhibited by the proton ionophores carbonyl cyanide m-chlorophenyl hydrazine (CCCP) and 2,4-dinitrophenol (DNP), but not by valinomycin, nigericin and nonactin. Uptake is reduced in the presence of the sulfhydryl reagent N-ethylmaleimide (NEM). Uptake is not affected by arginine, lysine, proline or compounds structurally related to histidine such as imidazole, 3-amino-1,2,4-triazole and urocanate. Only 1,2,4-triazolyl-3-alanine reduces the rate of L-histidine uptake significantly. In terms of biological role, major high-affinity histidine transporter. Binds and catalyzes the uptake of histidine into the cell. Functions as an histidine:proton symporter with high specificity for histidine. This Pseudomonas putida (strain ATCC 47054 / DSM 6125 / CFBP 8728 / NCIMB 11950 / KT2440) protein is L-histidine transporter HutT.